The following is a 409-amino-acid chain: Serine hydroxymethyltransferase (409 aa).

(6S)-5,6,7,8-tetrahydrofolate is bound by residues Leu-116 and 120–122; that span reads GHL. At Lys-225 the chain carries N6-(pyridoxal phosphate)lysine.

This sequence belongs to the SHMT family. In terms of assembly, homodimer. It depends on pyridoxal 5'-phosphate as a cofactor.

It localises to the cytoplasm. It carries out the reaction (6R)-5,10-methylene-5,6,7,8-tetrahydrofolate + glycine + H2O = (6S)-5,6,7,8-tetrahydrofolate + L-serine. The protein operates within one-carbon metabolism; tetrahydrofolate interconversion. It participates in amino-acid biosynthesis; glycine biosynthesis; glycine from L-serine: step 1/1. Its function is as follows. Catalyzes the reversible interconversion of serine and glycine with tetrahydrofolate (THF) serving as the one-carbon carrier. This reaction serves as the major source of one-carbon groups required for the biosynthesis of purines, thymidylate, methionine, and other important biomolecules. Also exhibits THF-independent aldolase activity toward beta-hydroxyamino acids, producing glycine and aldehydes, via a retro-aldol mechanism. The chain is Serine hydroxymethyltransferase from Acholeplasma laidlawii (strain PG-8A).